Here is a 523-residue protein sequence, read N- to C-terminus: MSDPVIKRALVSVSDKTGIVDFCRELASMGVEIFSTGGTLKALQDAGIAAESISTITGFPEIMDGRVKTLHPKIHGGLLAVRDNAEHQQAARENGIEFIDLVAVNLYPFEATIAKADVSFEEAIENIDIGGPSMLRSAAKNNESVTVITDAADYATVLDEMKSNGGATTRTTRLTLAAKVYALTSRYDTAIAAYMAKAAGVEGANDTMTVKLEKELGMRYGENPHQSAGLYKMDDGNGTRSFGAIFEKLHGKELSYNNMLDIAAATGIIEEFRGEEPSVVIVKHTNPCGVAQAPTLCEAYRKAFSTDTQAPFGGIIAFNRPLDMETANAVNEIFTEILIAPAFEEGVLDLLMKKKDRRLVLQKQPLPKAGWEFKSTPFGMLVQERDSKMVAPEELKVVTKRQPTEEELADLMFAWKIARHIKSNTILYVKNRQTFGVGAGQMSRVDSSKIARWKASEVGLDLKGSVVASDAFFPFADGLLAAAEAGVTAVIQPGGSIRDNEVIEAADANNLAMVFTGMRHFKH.

In terms of domain architecture, MGS-like spans 1-149 (MSDPVIKRAL…KNNESVTVIT (149 aa)).

Belongs to the PurH family.

The catalysed reaction is (6R)-10-formyltetrahydrofolate + 5-amino-1-(5-phospho-beta-D-ribosyl)imidazole-4-carboxamide = 5-formamido-1-(5-phospho-D-ribosyl)imidazole-4-carboxamide + (6S)-5,6,7,8-tetrahydrofolate. It catalyses the reaction IMP + H2O = 5-formamido-1-(5-phospho-D-ribosyl)imidazole-4-carboxamide. The protein operates within purine metabolism; IMP biosynthesis via de novo pathway; 5-formamido-1-(5-phospho-D-ribosyl)imidazole-4-carboxamide from 5-amino-1-(5-phospho-D-ribosyl)imidazole-4-carboxamide (10-formyl THF route): step 1/1. It functions in the pathway purine metabolism; IMP biosynthesis via de novo pathway; IMP from 5-formamido-1-(5-phospho-D-ribosyl)imidazole-4-carboxamide: step 1/1. The polypeptide is Bifunctional purine biosynthesis protein PurH (Chlorobaculum parvum (strain DSM 263 / NCIMB 8327) (Chlorobium vibrioforme subsp. thiosulfatophilum)).